The sequence spans 152 residues: Cell division protein SepF (152 aa).

Residues E23–Q32 are compositionally biased toward basic and acidic residues. Positions E23–K42 are disordered.

It belongs to the SepF family. As to quaternary structure, homodimer. Interacts with FtsZ.

The protein resides in the cytoplasm. Functionally, cell division protein that is part of the divisome complex and is recruited early to the Z-ring. Probably stimulates Z-ring formation, perhaps through the cross-linking of FtsZ protofilaments. Its function overlaps with FtsA. This chain is Cell division protein SepF, found in Listeria innocua serovar 6a (strain ATCC BAA-680 / CLIP 11262).